The sequence spans 184 residues: Large ribosomal subunit protein uL6 (184 aa).

Belongs to the universal ribosomal protein uL6 family. Part of the 50S ribosomal subunit.

This protein binds to the 23S rRNA, and is important in its secondary structure. It is located near the subunit interface in the base of the L7/L12 stalk, and near the tRNA binding site of the peptidyltransferase center. In Thermotoga maritima (strain ATCC 43589 / DSM 3109 / JCM 10099 / NBRC 100826 / MSB8), this protein is Large ribosomal subunit protein uL6.